The following is an 873-amino-acid chain: Valine--tRNA ligase (873 aa).

A 'HIGH' region motif is present at residues 43–53 (PNVTGVLHMGH). Positions 532–536 (KMSKS) match the 'KMSKS' region motif. Residue K535 participates in ATP binding. The stretch at 802-873 (LGNLINVEEE…IEESIAALTK (72 aa)) forms a coiled coil.

It belongs to the class-I aminoacyl-tRNA synthetase family. ValS type 1 subfamily. In terms of assembly, monomer.

The protein localises to the cytoplasm. It catalyses the reaction tRNA(Val) + L-valine + ATP = L-valyl-tRNA(Val) + AMP + diphosphate. Its function is as follows. Catalyzes the attachment of valine to tRNA(Val). As ValRS can inadvertently accommodate and process structurally similar amino acids such as threonine, to avoid such errors, it has a 'posttransfer' editing activity that hydrolyzes mischarged Thr-tRNA(Val) in a tRNA-dependent manner. This is Valine--tRNA ligase from Parabacteroides distasonis (strain ATCC 8503 / DSM 20701 / CIP 104284 / JCM 5825 / NCTC 11152).